Reading from the N-terminus, the 360-residue chain is Phenylalanine--tRNA ligase alpha subunit (360 aa).

A Mg(2+)-binding site is contributed by glutamate 260.

The protein belongs to the class-II aminoacyl-tRNA synthetase family. Phe-tRNA synthetase alpha subunit type 1 subfamily. As to quaternary structure, tetramer of two alpha and two beta subunits. Requires Mg(2+) as cofactor.

It localises to the cytoplasm. It catalyses the reaction tRNA(Phe) + L-phenylalanine + ATP = L-phenylalanyl-tRNA(Phe) + AMP + diphosphate + H(+). The polypeptide is Phenylalanine--tRNA ligase alpha subunit (Rhodopseudomonas palustris (strain BisB5)).